The chain runs to 304 residues: Quinolinate synthase 1 (304 aa).

Residues H24 and S41 each coordinate iminosuccinate. C86 is a binding site for [4Fe-4S] cluster. Residues 112 to 114 (YVN) and S129 contribute to the iminosuccinate site. C171 lines the [4Fe-4S] cluster pocket. Iminosuccinate-binding positions include 197 to 199 (HPE) and T214. C259 is a binding site for [4Fe-4S] cluster.

Belongs to the quinolinate synthase family. Type 2 subfamily. The cofactor is [4Fe-4S] cluster.

It localises to the cytoplasm. It carries out the reaction iminosuccinate + dihydroxyacetone phosphate = quinolinate + phosphate + 2 H2O + H(+). Its pathway is cofactor biosynthesis; NAD(+) biosynthesis; quinolinate from iminoaspartate: step 1/1. Catalyzes the condensation of iminoaspartate with dihydroxyacetone phosphate to form quinolinate. The chain is Quinolinate synthase 1 from Methanosarcina acetivorans (strain ATCC 35395 / DSM 2834 / JCM 12185 / C2A).